The chain runs to 917 residues: Protein translocase subunit SecA (917 aa).

Residues Gln87, 105-109 (GEGKT), and Asp516 contribute to the ATP site. Positions 901, 903, 912, and 913 each coordinate Zn(2+).

Belongs to the SecA family. Monomer and homodimer. Part of the essential Sec protein translocation apparatus which comprises SecA, SecYEG and auxiliary proteins SecDF-YajC and YidC. Zn(2+) serves as cofactor.

The protein resides in the cell inner membrane. It localises to the cytoplasm. It carries out the reaction ATP + H2O + cellular proteinSide 1 = ADP + phosphate + cellular proteinSide 2.. Functionally, part of the Sec protein translocase complex. Interacts with the SecYEG preprotein conducting channel. Has a central role in coupling the hydrolysis of ATP to the transfer of proteins into and across the cell membrane, serving both as a receptor for the preprotein-SecB complex and as an ATP-driven molecular motor driving the stepwise translocation of polypeptide chains across the membrane. This chain is Protein translocase subunit SecA, found in Verminephrobacter eiseniae (strain EF01-2).